A 189-amino-acid polypeptide reads, in one-letter code: Elongation factor P (189 aa).

Residue Lys-34 is modified to N6-(3,6-diaminohexanoyl)-5-hydroxylysine.

The protein belongs to the elongation factor P family. Post-translationally, may be beta-lysylated on the epsilon-amino group of Lys-34 by the combined action of EpmA and EpmB, and then hydroxylated on the C5 position of the same residue by EpmC (if this protein is present). Lysylation is critical for the stimulatory effect of EF-P on peptide-bond formation. The lysylation moiety may extend toward the peptidyltransferase center and stabilize the terminal 3-CCA end of the tRNA. Hydroxylation of the C5 position on Lys-34 may allow additional potential stabilizing hydrogen-bond interactions with the P-tRNA.

Its subcellular location is the cytoplasm. The protein operates within protein biosynthesis; polypeptide chain elongation. In terms of biological role, involved in peptide bond synthesis. Alleviates ribosome stalling that occurs when 3 or more consecutive Pro residues or the sequence PPG is present in a protein, possibly by augmenting the peptidyl transferase activity of the ribosome. Modification of Lys-34 is required for alleviation. This chain is Elongation factor P, found in Alcanivorax borkumensis (strain ATCC 700651 / DSM 11573 / NCIMB 13689 / SK2).